A 94-amino-acid chain; its full sequence is Integration host factor subunit beta (94 aa).

It belongs to the bacterial histone-like protein family. Heterodimer of an alpha and a beta chain.

Its function is as follows. This protein is one of the two subunits of integration host factor, a specific DNA-binding protein that functions in genetic recombination as well as in transcriptional and translational control. In Escherichia coli O127:H6 (strain E2348/69 / EPEC), this protein is Integration host factor subunit beta.